The sequence spans 706 residues: Ribosomal RNA large subunit methyltransferase K/L (706 aa).

Residues 43–154 (LMYQSLLWSR…RDMASVALDL (112 aa)) form the THUMP domain.

It belongs to the methyltransferase superfamily. RlmKL family.

Its subcellular location is the cytoplasm. It carries out the reaction guanosine(2445) in 23S rRNA + S-adenosyl-L-methionine = N(2)-methylguanosine(2445) in 23S rRNA + S-adenosyl-L-homocysteine + H(+). The catalysed reaction is guanosine(2069) in 23S rRNA + S-adenosyl-L-methionine = N(2)-methylguanosine(2069) in 23S rRNA + S-adenosyl-L-homocysteine + H(+). In terms of biological role, specifically methylates the guanine in position 2445 (m2G2445) and the guanine in position 2069 (m7G2069) of 23S rRNA. The polypeptide is Ribosomal RNA large subunit methyltransferase K/L (Yersinia pestis bv. Antiqua (strain Antiqua)).